A 513-amino-acid chain; its full sequence is Cytochrome P450 1A2 (513 aa).

The O-linked (GlcNAc) serine glycan is linked to S68. F225 lines the substrate pocket. Residue C456 coordinates heme.

Belongs to the cytochrome P450 family. Interacts with PGRMC1; the interaction requires PGRMC1 homodimerization. Heme serves as cofactor. As to expression, found in lung and liver.

Its subcellular location is the endoplasmic reticulum membrane. It is found in the microsome membrane. It catalyses the reaction an organic molecule + reduced [NADPH--hemoprotein reductase] + O2 = an alcohol + oxidized [NADPH--hemoprotein reductase] + H2O + H(+). The enzyme catalyses 17beta-estradiol + reduced [NADPH--hemoprotein reductase] + O2 = 2-hydroxy-17beta-estradiol + oxidized [NADPH--hemoprotein reductase] + H2O + H(+). It carries out the reaction 17beta-estradiol + reduced [NADPH--hemoprotein reductase] + O2 = 4-hydroxy-17beta-estradiol + oxidized [NADPH--hemoprotein reductase] + H2O + H(+). The catalysed reaction is estrone + reduced [NADPH--hemoprotein reductase] + O2 = 2-hydroxyestrone + oxidized [NADPH--hemoprotein reductase] + H2O + H(+). It catalyses the reaction estrone + reduced [NADPH--hemoprotein reductase] + O2 = 4-hydroxyestrone + oxidized [NADPH--hemoprotein reductase] + H2O + H(+). The enzyme catalyses cholesterol + reduced [NADPH--hemoprotein reductase] + O2 = 25-hydroxycholesterol + oxidized [NADPH--hemoprotein reductase] + H2O + H(+). It carries out the reaction all-trans-retinol + reduced [NADPH--hemoprotein reductase] + O2 = all-trans-retinal + oxidized [NADPH--hemoprotein reductase] + 2 H2O + H(+). The catalysed reaction is all-trans-retinal + reduced [NADPH--hemoprotein reductase] + O2 = all-trans-retinoate + oxidized [NADPH--hemoprotein reductase] + H2O + 2 H(+). It catalyses the reaction (5Z,8Z,11Z,14Z)-eicosatetraenoate + reduced [NADPH--hemoprotein reductase] + O2 = (14R,15S)-epoxy-(5Z,8Z,11Z)-eicosatrienoate + oxidized [NADPH--hemoprotein reductase] + H2O + H(+). The enzyme catalyses (5Z,8Z,11Z,14Z)-eicosatetraenoate + reduced [NADPH--hemoprotein reductase] + O2 = (14S,15R)-epoxy-(5Z,8Z,11Z)-eicosatrienoate + oxidized [NADPH--hemoprotein reductase] + H2O + H(+). It carries out the reaction (5Z,8Z,11Z,14Z,17Z)-eicosapentaenoate + reduced [NADPH--hemoprotein reductase] + O2 = (17R,18S)-epoxy-(5Z,8Z,11Z,14Z)-eicosatetraenoate + oxidized [NADPH--hemoprotein reductase] + H2O + H(+). The catalysed reaction is (4Z,7Z,10Z,13Z,16Z,19Z)-docosahexaenoate + reduced [NADPH--hemoprotein reductase] + O2 = (19R,20S)-epoxy-(4Z,7Z,10Z,13Z,16Z)-docosapentaenoate + oxidized [NADPH--hemoprotein reductase] + H2O + H(+). It catalyses the reaction (5S)-hydroperoxy-(6E,8Z,11Z,14Z)-eicosatetraenoate = 5-oxo-(6E,8Z,11Z,14Z)-eicosatetraenoate + H2O. The enzyme catalyses (12S)-hydroperoxy-(5Z,8Z,10E,14Z)-eicosatetraenoate = 12-oxo-(5Z,8Z,10E,14Z)-eicosatetraenoate + H2O. It carries out the reaction (15S)-hydroperoxy-(5Z,8Z,11Z,13E)-eicosatetraenoate = 15-oxo-(5Z,8Z,11Z,13E)-eicosatetraenoate + H2O. The catalysed reaction is (13S)-hydroperoxy-(9Z,11E)-octadecadienoate = 13-oxo-(9Z,11E)-octadecadienoate + H2O. It catalyses the reaction (5Z,8Z,11Z,14Z)-eicosatetraenoate + reduced [NADPH--hemoprotein reductase] + O2 = 13-hydroxy-(5Z,8Z,11Z,14Z)-eicosatetraenoate + oxidized [NADPH--hemoprotein reductase] + H2O + H(+). The enzyme catalyses (5Z,8Z,11Z,14Z)-eicosatetraenoate + reduced [NADPH--hemoprotein reductase] + O2 = 19-hydroxy-(5Z,8Z,11Z,14Z)-eicosatetraenoate + oxidized [NADPH--hemoprotein reductase] + H2O + H(+). It carries out the reaction (9Z,12Z)-octadecadienoate + reduced [NADPH--hemoprotein reductase] + O2 = 11-hydroxy-(9Z,12Z)-octadecadienoate + oxidized [NADPH--hemoprotein reductase] + H2O + H(+). It functions in the pathway cofactor metabolism; retinol metabolism. The protein operates within steroid metabolism; cholesterol metabolism. It participates in lipid metabolism; arachidonate metabolism. In terms of biological role, a cytochrome P450 monooxygenase involved in the metabolism of various endogenous substrates, including fatty acids, steroid hormones and vitamins. Mechanistically, uses molecular oxygen inserting one oxygen atom into a substrate, and reducing the second into a water molecule, with two electrons provided by NADPH via cytochrome P450 reductase (NADPH--hemoprotein reductase). Catalyzes the hydroxylation of carbon-hydrogen bonds. Exhibits high catalytic activity for the formation of hydroxyestrogens from estrone (E1) and 17beta-estradiol (E2), namely 2-hydroxy E1 and E2. Metabolizes cholesterol toward 25-hydroxycholesterol, a physiological regulator of cellular cholesterol homeostasis. May act as a major enzyme for all-trans retinoic acid biosynthesis in the liver. Catalyzes two successive oxidative transformation of all-trans retinol to all-trans retinal and then to the active form all-trans retinoic acid. Primarily catalyzes stereoselective epoxidation of the last double bond of polyunsaturated fatty acids (PUFA), displaying a strong preference for the (R,S) stereoisomer. Catalyzes bisallylic hydroxylation and omega-1 hydroxylation of PUFA. May also participate in eicosanoids metabolism by converting hydroperoxide species into oxo metabolites (lipoxygenase-like reaction, NADPH-independent). Plays a role in the oxidative metabolism of xenobiotics. Catalyzes the N-hydroxylation of heterocyclic amines and the O-deethylation of phenacetin. Metabolizes caffeine via N3-demethylation. This Mesocricetus auratus (Golden hamster) protein is Cytochrome P450 1A2 (CYP1A2).